The primary structure comprises 329 residues: Gibberellin 2-beta-dioxygenase 1 (329 aa).

In terms of domain architecture, Fe2OG dioxygenase spans 165–273; sequence NTDSILRLNH…RVSMIYFAGP (109 aa). His197, Asp199, and His254 together coordinate Fe cation. Residue Arg264 is part of the active site. Position 264 (Arg264) interacts with 2-oxoglutarate.

The protein belongs to the iron/ascorbate-dependent oxidoreductase family. GA2OX subfamily. Fe(2+) serves as cofactor. In terms of tissue distribution, preferentially expressed in flowers, siliques, and upper stems. Not expressed in the apex.

The enzyme catalyses gibberellin A1 + 2-oxoglutarate + O2 = gibberellin A8 + succinate + CO2. It functions in the pathway plant hormone biosynthesis; gibberellin biosynthesis. Functionally, catalyzes the 2-beta-hydroxylation of several biologically active gibberellins, leading to the homeostatic regulation of their endogenous level. Catabolism of gibberellins (GAs) plays a central role in plant development. Converts GA9/GA20 to GA51/GA29 and GA4/GA1 to GA34/GA8. This Arabidopsis thaliana (Mouse-ear cress) protein is Gibberellin 2-beta-dioxygenase 1 (GA2OX1).